Here is a 391-residue protein sequence, read N- to C-terminus: DNA primase small subunit PriS (391 aa).

Catalysis depends on residues Asp-98, Asp-100, and Asp-294.

The protein belongs to the eukaryotic-type primase small subunit family. In terms of assembly, heterodimer of a small subunit (PriS) and a large subunit (PriL). Requires Mg(2+) as cofactor. Mn(2+) is required as a cofactor.

Catalytic subunit of DNA primase, an RNA polymerase that catalyzes the synthesis of short RNA molecules used as primers for DNA polymerase during DNA replication. The small subunit contains the primase catalytic core and has DNA synthesis activity on its own. Binding to the large subunit stabilizes and modulates the activity, increasing the rate of DNA synthesis while decreasing the length of the DNA fragments, and conferring RNA synthesis capability. The DNA polymerase activity may enable DNA primase to also catalyze primer extension after primer synthesis. May also play a role in DNA repair. This chain is DNA primase small subunit PriS, found in Halobacterium salinarum (strain ATCC 29341 / DSM 671 / R1).